Reading from the N-terminus, the 281-residue chain is Elongation factor Ts (281 aa).

The tract at residues 80–83 (TDFV) is involved in Mg(2+) ion dislocation from EF-Tu.

This sequence belongs to the EF-Ts family.

It is found in the cytoplasm. In terms of biological role, associates with the EF-Tu.GDP complex and induces the exchange of GDP to GTP. It remains bound to the aminoacyl-tRNA.EF-Tu.GTP complex up to the GTP hydrolysis stage on the ribosome. The chain is Elongation factor Ts from Vibrio atlanticus (strain LGP32) (Vibrio splendidus (strain Mel32)).